Reading from the N-terminus, the 558-residue chain is NXPE family member 2 (558 aa).

The chain crosses the membrane as a helical span at residues 17 to 37 (ASARKLFLIVLIIFVFWVVFM).

It belongs to the NXPE family.

The protein localises to the membrane. This chain is NXPE family member 2 (Nxpe2), found in Mus musculus (Mouse).